Consider the following 229-residue polypeptide: Ribonuclease 3 (229 aa).

The 130-residue stretch at 4–133 folds into the RNase III domain; that stretch reads WEELQESVGF…FIGALYLDNG (130 aa). E46 is a binding site for Mg(2+). Residue D50 is part of the active site. Mg(2+)-binding residues include D119 and E122. E122 is an active-site residue. The 70-residue stretch at 159–228 folds into the DRBM domain; sequence DYKTQLQEIV…AQFAINQLTH (70 aa).

Belongs to the ribonuclease III family. As to quaternary structure, homodimer. It depends on Mg(2+) as a cofactor.

The protein resides in the cytoplasm. It catalyses the reaction Endonucleolytic cleavage to 5'-phosphomonoester.. Its function is as follows. Digests double-stranded RNA. Involved in the processing of primary rRNA transcript to yield the immediate precursors to the large and small rRNAs (23S and 16S). Processes some mRNAs, and tRNAs when they are encoded in the rRNA operon. Processes pre-crRNA and tracrRNA of type II CRISPR loci if present in the organism. The polypeptide is Ribonuclease 3 (Listeria innocua serovar 6a (strain ATCC BAA-680 / CLIP 11262)).